Here is a 308-residue protein sequence, read N- to C-terminus: Putative T-box protein 30/42 (308 aa).

The T-box DNA-binding region spans 11–192 (MSNEELWKER…KHSTFGNRSE (182 aa)). Residues 186 to 220 (TFGNRSEGGIKRKTSDAAGQLPSKRSSKKPVKKDV) form a disordered region.

It is found in the nucleus. Its function is as follows. Involved in the regulatory network to control embryonic patterning and morphogenesis. Implicated in negatively regulating vab-7 expression at the anterior of embryos. The sequence is that of Putative T-box protein 30/42 (tbx-30) from Caenorhabditis elegans.